The primary structure comprises 551 residues: ATP synthase subunit alpha (551 aa).

174–181 (GDRQTGKT) provides a ligand contact to ATP.

The protein belongs to the ATPase alpha/beta chains family. As to quaternary structure, F-type ATPases have 2 components, CF(1) - the catalytic core - and CF(0) - the membrane proton channel. CF(1) has five subunits: alpha(3), beta(3), gamma(1), delta(1), epsilon(1). CF(0) has three main subunits: a(1), b(2) and c(9-12). The alpha and beta chains form an alternating ring which encloses part of the gamma chain. CF(1) is attached to CF(0) by a central stalk formed by the gamma and epsilon chains, while a peripheral stalk is formed by the delta and b chains.

It is found in the cell inner membrane. It catalyses the reaction ATP + H2O + 4 H(+)(in) = ADP + phosphate + 5 H(+)(out). In terms of biological role, produces ATP from ADP in the presence of a proton gradient across the membrane. The alpha chain is a regulatory subunit. The protein is ATP synthase subunit alpha of Salinibacter ruber (strain DSM 13855 / M31).